Here is a 429-residue protein sequence, read N- to C-terminus: Histidine--tRNA ligase (429 aa).

It belongs to the class-II aminoacyl-tRNA synthetase family. As to quaternary structure, homodimer.

The protein resides in the cytoplasm. It catalyses the reaction tRNA(His) + L-histidine + ATP = L-histidyl-tRNA(His) + AMP + diphosphate + H(+). This Desulfotalea psychrophila (strain LSv54 / DSM 12343) protein is Histidine--tRNA ligase.